The following is a 643-amino-acid chain: 3D-(3,5/4)-trihydroxycyclohexane-1,2-dione hydrolase (643 aa).

Glu-65 contacts thiamine diphosphate. The interval 441–521 is thiamine pyrophosphate binding; that stretch reads SLPGDLQRMW…VNVLLFDNCG (81 aa). Asp-492 and Asn-519 together coordinate Mg(2+).

Belongs to the TPP enzyme family. Mg(2+) serves as cofactor. It depends on thiamine diphosphate as a cofactor.

The enzyme catalyses 3D-3,5/4-trihydroxycyclohexane-1,2-dione + H2O = 5-deoxy-D-glucuronate + H(+). It functions in the pathway polyol metabolism; myo-inositol degradation into acetyl-CoA; acetyl-CoA from myo-inositol: step 3/7. Involved in the cleavage of the C1-C2 bond of 3D-(3,5/4)-trihydroxycyclohexane-1,2-dione (THcHDO) to yield 5-deoxy-glucuronate (5DG). The polypeptide is 3D-(3,5/4)-trihydroxycyclohexane-1,2-dione hydrolase (Clostridium botulinum (strain Eklund 17B / Type B)).